A 78-amino-acid chain; its full sequence is Small ribosomal subunit protein bS18 (78 aa).

It belongs to the bacterial ribosomal protein bS18 family. In terms of assembly, part of the 30S ribosomal subunit. Forms a tight heterodimer with protein bS6.

Binds as a heterodimer with protein bS6 to the central domain of the 16S rRNA, where it helps stabilize the platform of the 30S subunit. The chain is Small ribosomal subunit protein bS18 from Pediococcus pentosaceus (strain ATCC 25745 / CCUG 21536 / LMG 10740 / 183-1w).